The chain runs to 156 residues: Small ribosomal subunit protein uS7 (156 aa).

Belongs to the universal ribosomal protein uS7 family. In terms of assembly, part of the 30S ribosomal subunit. Contacts proteins S9 and S11.

In terms of biological role, one of the primary rRNA binding proteins, it binds directly to 16S rRNA where it nucleates assembly of the head domain of the 30S subunit. Is located at the subunit interface close to the decoding center, probably blocks exit of the E-site tRNA. The chain is Small ribosomal subunit protein uS7 from Chromohalobacter salexigens (strain ATCC BAA-138 / DSM 3043 / CIP 106854 / NCIMB 13768 / 1H11).